The primary structure comprises 250 residues: uncharacterized protein (250 aa).

Residues 1-52 constitute a mitochondrion transit peptide; it reads MALAWCVVRRSASKFASVYGGRVRSISAVANRASLARNPSSIRPFVSRALNY. The interval 124–147 is disordered; the sequence is PSLVSDENDDDDDDDEGPSNESSI. Residues 129–141 show a composition bias toward acidic residues; sequence DENDDDDDDDEGP.

This sequence belongs to the MAM33 family.

The protein localises to the mitochondrion matrix. This is an uncharacterized protein from Arabidopsis thaliana (Mouse-ear cress).